Reading from the N-terminus, the 308-residue chain is Protein translocase subunit SecF (308 aa).

The next 6 helical transmembrane spans lie at 14–34 (FFLL…LFGF), 134–154 (VYAV…RFEF), 158–178 (ISGI…FALL), 185–205 (TFVA…IVIF), 238–258 (SIRT…FGGI), and 267–287 (LIIG…PIWV).

The protein belongs to the SecD/SecF family. SecF subfamily. In terms of assembly, forms a complex with SecD. Part of the essential Sec protein translocation apparatus which comprises SecA, SecYEG and auxiliary proteins SecDF. Other proteins may also be involved.

The protein resides in the cell membrane. Functionally, part of the Sec protein translocase complex. Interacts with the SecYEG preprotein conducting channel. SecDF uses the proton motive force (PMF) to complete protein translocation after the ATP-dependent function of SecA. The protein is Protein translocase subunit SecF of Alicyclobacillus acidocaldarius subsp. acidocaldarius (strain ATCC 27009 / DSM 446 / BCRC 14685 / JCM 5260 / KCTC 1825 / NBRC 15652 / NCIMB 11725 / NRRL B-14509 / 104-IA) (Bacillus acidocaldarius).